Consider the following 297-residue polypeptide: Quinate/shikimate dehydrogenase (297 aa).

Residues lysine 80 and aspartate 116 each contribute to the substrate site. Residues 141–144 (AGGA), 164–167 (NRRD), lysine 214, 241–244 (CVYN), and glycine 264 each bind NAD(+).

Belongs to the shikimate dehydrogenase family. Homodimer.

The enzyme catalyses L-quinate + NAD(+) = 3-dehydroquinate + NADH + H(+). It carries out the reaction L-quinate + NADP(+) = 3-dehydroquinate + NADPH + H(+). The catalysed reaction is shikimate + NADP(+) = 3-dehydroshikimate + NADPH + H(+). It catalyses the reaction shikimate + NAD(+) = 3-dehydroshikimate + NADH + H(+). Its pathway is metabolic intermediate biosynthesis; chorismate biosynthesis; chorismate from D-erythrose 4-phosphate and phosphoenolpyruvate: step 4/7. Its function is as follows. The actual biological function of YdiB remains unclear, nor is it known whether 3-dehydroshikimate or quinate represents the natural substrate. Catalyzes the reversible NAD-dependent reduction of both 3-dehydroshikimate (DHSA) and 3-dehydroquinate to yield shikimate (SA) and quinate, respectively. It can use both NAD or NADP for catalysis, however it has higher catalytic efficiency with NAD. In Shigella dysenteriae serotype 1 (strain Sd197), this protein is Quinate/shikimate dehydrogenase.